Consider the following 284-residue polypeptide: MEMO1 family protein MmarC5_0191 (284 aa).

Belongs to the MEMO1 family.

The polypeptide is MEMO1 family protein MmarC5_0191 (Methanococcus maripaludis (strain C5 / ATCC BAA-1333)).